The chain runs to 110 residues: RNA polymerase II transcriptional coactivator (110 aa).

The tract at residues 1–50 is disordered; sequence MPKTKKKDSSSDSDSGPDDRIKPASKKAKESDAPNSDPKDSGENGATSWT. Residues 17 to 42 show a composition bias toward basic and acidic residues; that stretch reads PDDRIKPASKKAKESDAPNSDPKDSG.

The protein belongs to the transcriptional coactivator PC4 family.

Its subcellular location is the nucleus. In terms of biological role, general coactivator that functions cooperatively with TAFs and mediates functional interactions between upstream activators and the general transcriptional machinery. Binds single-stranded DNA. Binds specifically to the NssBF element, a short nucleotide sequence of the 1731 retrotransposon, to repress promoter activity. In Drosophila melanogaster (Fruit fly), this protein is RNA polymerase II transcriptional coactivator (Ssb-c31a).